The sequence spans 609 residues: Putative transcriptional regulatory protein y4pA (609 aa).

Positions 313 to 533 constitute a Sigma-54 factor interaction domain; the sequence is IVGRSPSIQQ…LRSVLETAAI (221 aa). 395–404 contacts ATP; the sequence is HPKATLLIES. A DNA-binding region (H-T-H motif) is located at residues 578–597; it reads RGEAARYLGISRKTLYNKMR.

Functionally, probable transcriptional regulator that acts in conjunction with sigma-54. The sequence is that of Putative transcriptional regulatory protein y4pA from Sinorhizobium fredii (strain NBRC 101917 / NGR234).